A 64-amino-acid polypeptide reads, in one-letter code: Large ribosomal subunit protein uL30 (64 aa).

Residues 1-22 (MAKAAKTIKVEQTRSAIRRQHS) are disordered.

The protein belongs to the universal ribosomal protein uL30 family. Part of the 50S ribosomal subunit.

The sequence is that of Large ribosomal subunit protein uL30 from Nitrobacter hamburgensis (strain DSM 10229 / NCIMB 13809 / X14).